Reading from the N-terminus, the 181-residue chain is Diphosphoinositol polyphosphate phosphohydrolase NUDT4B (181 aa).

Substrate-binding positions include Arg-10, Lys-18–Arg-20, and Ser-39–Arg-41. Residues Lys-18–Lys-145 enclose the Nudix hydrolase domain. Mg(2+)-binding residues include Gly-50 and Glu-66. The Nudix box signature appears at Gly-51–Gly-72. Glu-69 (proton acceptor) is an active-site residue. Residue Glu-70 coordinates Mg(2+). Residues Arg-90–His-92, Arg-116, and Lys-134 each bind substrate.

Belongs to the Nudix hydrolase family. DIPP subfamily. Requires Mg(2+) as cofactor. Mn(2+) serves as cofactor.

Its subcellular location is the cytoplasm. The enzyme catalyses diphospho-myo-inositol polyphosphate + H2O = myo-inositol polyphosphate + phosphate.. In terms of biological role, cleaves a beta-phosphate from the diphosphate groups in PP-InsP5 (diphosphoinositol pentakisphosphate), PP-InsP4 and [PP]2-InsP4 (bisdiphosphoinositol tetrakisphosphate), suggesting that it may play a role in signal transduction. Also able to catalyze the hydrolysis of dinucleoside oligophosphate Ap6A, but not Ap5A. The major reaction products are ADP and p4a from Ap6A. Also able to hydrolyze 5-phosphoribose 1-diphosphate. Does not play a role in U8 snoRNA decapping activity. Binds U8 snoRNA. The sequence is that of Diphosphoinositol polyphosphate phosphohydrolase NUDT4B from Homo sapiens (Human).